Here is a 332-residue protein sequence, read N- to C-terminus: DNA-directed RNA polymerase subunit alpha (332 aa).

Positions 1–244 (MKKHAKVYYS…AHLNLLADVE (244 aa)) are alpha N-terminal domain (alpha-NTD). The interval 259–332 (IKEEPIRRFS…NYKNENKGEN (74 aa)) is alpha C-terminal domain (alpha-CTD).

It belongs to the RNA polymerase alpha chain family. In terms of assembly, homodimer. The RNAP catalytic core consists of 2 alpha, 1 beta, 1 beta' and 1 omega subunit. When a sigma factor is associated with the core the holoenzyme is formed, which can initiate transcription.

It carries out the reaction RNA(n) + a ribonucleoside 5'-triphosphate = RNA(n+1) + diphosphate. DNA-dependent RNA polymerase catalyzes the transcription of DNA into RNA using the four ribonucleoside triphosphates as substrates. The chain is DNA-directed RNA polymerase subunit alpha from Mesomycoplasma hyopneumoniae (strain 7448) (Mycoplasma hyopneumoniae).